The following is a 371-amino-acid chain: Chorismate synthase (371 aa).

NADP(+) is bound by residues arginine 48 and arginine 54. Residues 131-133 (RSS), 245-246 (NA), glycine 290, 305-309 (KPTSS), and arginine 331 each bind FMN.

This sequence belongs to the chorismate synthase family. In terms of assembly, homotetramer. It depends on FMNH2 as a cofactor.

The enzyme catalyses 5-O-(1-carboxyvinyl)-3-phosphoshikimate = chorismate + phosphate. The protein operates within metabolic intermediate biosynthesis; chorismate biosynthesis; chorismate from D-erythrose 4-phosphate and phosphoenolpyruvate: step 7/7. Functionally, catalyzes the anti-1,4-elimination of the C-3 phosphate and the C-6 proR hydrogen from 5-enolpyruvylshikimate-3-phosphate (EPSP) to yield chorismate, which is the branch point compound that serves as the starting substrate for the three terminal pathways of aromatic amino acid biosynthesis. This reaction introduces a second double bond into the aromatic ring system. The chain is Chorismate synthase from Mesorhizobium japonicum (strain LMG 29417 / CECT 9101 / MAFF 303099) (Mesorhizobium loti (strain MAFF 303099)).